Reading from the N-terminus, the 289-residue chain is Pantothenate synthetase (289 aa).

Residue 33-40 (MGYLHEGH) participates in ATP binding. The Proton donor role is filled by H40. Residue Q70 participates in (R)-pantoate binding. Q70 is a beta-alanine binding site. 157-160 (GEKD) lines the ATP pocket. Q163 provides a ligand contact to (R)-pantoate. ATP contacts are provided by residues V186 and 194–197 (LSSR).

Belongs to the pantothenate synthetase family. In terms of assembly, homodimer.

The protein resides in the cytoplasm. It carries out the reaction (R)-pantoate + beta-alanine + ATP = (R)-pantothenate + AMP + diphosphate + H(+). Its pathway is cofactor biosynthesis; (R)-pantothenate biosynthesis; (R)-pantothenate from (R)-pantoate and beta-alanine: step 1/1. Catalyzes the condensation of pantoate with beta-alanine in an ATP-dependent reaction via a pantoyl-adenylate intermediate. This is Pantothenate synthetase from Anaeromyxobacter dehalogenans (strain 2CP-C).